Consider the following 273-residue polypeptide: 4-hydroxy-tetrahydrodipicolinate reductase (273 aa).

Residues glycine 12–methionine 17 and glutamate 38 contribute to the NAD(+) site. Arginine 39 is a binding site for NADP(+). NAD(+)-binding positions include glycine 102 to threonine 104 and alanine 126 to phenylalanine 129. Histidine 159 functions as the Proton donor/acceptor in the catalytic mechanism. Position 160 (histidine 160) interacts with (S)-2,3,4,5-tetrahydrodipicolinate. Lysine 163 acts as the Proton donor in catalysis. A (S)-2,3,4,5-tetrahydrodipicolinate-binding site is contributed by glycine 169 to threonine 170.

This sequence belongs to the DapB family. As to quaternary structure, homotetramer.

Its subcellular location is the cytoplasm. The enzyme catalyses (S)-2,3,4,5-tetrahydrodipicolinate + NAD(+) + H2O = (2S,4S)-4-hydroxy-2,3,4,5-tetrahydrodipicolinate + NADH + H(+). It catalyses the reaction (S)-2,3,4,5-tetrahydrodipicolinate + NADP(+) + H2O = (2S,4S)-4-hydroxy-2,3,4,5-tetrahydrodipicolinate + NADPH + H(+). It participates in amino-acid biosynthesis; L-lysine biosynthesis via DAP pathway; (S)-tetrahydrodipicolinate from L-aspartate: step 4/4. Its function is as follows. Catalyzes the conversion of 4-hydroxy-tetrahydrodipicolinate (HTPA) to tetrahydrodipicolinate. This Pectobacterium carotovorum subsp. carotovorum (strain PC1) protein is 4-hydroxy-tetrahydrodipicolinate reductase.